Here is a 231-residue protein sequence, read N- to C-terminus: Elongation factor 1-delta 2 (231 aa).

Ala-2 is modified (N-acetylalanine). Residues 11 to 73 (SGLKKLDEHL…LRISGVSAEG (63 aa)) enclose the GST C-terminal domain. A disordered region spans residues 82-136 (SPITEEAVATPPAADSKDTAAEEEDDDDVDLFGEETEEEKKAAEERAASVKASTK). Positions 102–118 (AEEEDDDDVDLFGEETE) are enriched in acidic residues. The span at 119 to 129 (EEKKAAEERAA) shows a compositional bias: basic and acidic residues.

Belongs to the EF-1-beta/EF-1-delta family. EF-1 is composed of 4 subunits: alpha, beta (1B-alpha=beta'), delta (1B-beta), and gamma (1B-gamma).

Functionally, EF-1-beta and EF-1-delta stimulate the exchange of GDP bound to EF-1-alpha to GTP. The sequence is that of Elongation factor 1-delta 2 from Arabidopsis thaliana (Mouse-ear cress).